The primary structure comprises 300 residues: Transcription elongation factor A protein 2 (300 aa).

In terms of domain architecture, TFIIS N-terminal spans 6-83 (EEIARIARRL…KSWKKLLDAS (78 aa)). K58 is covalently cross-linked (Glycyl lysine isopeptide (Lys-Gly) (interchain with G-Cter in ubiquitin)). Residues S60 and S101 each carry the phosphoserine modification. Positions 84–131 (DAKARERRRGGSLPTSSSKEASEAQDPSRKRPELPRMPSTPRITTFPP) are disordered. The segment covering 103 to 117 (EASEAQDPSRKRPEL) has biased composition (basic and acidic residues). The 117-residue stretch at 139–255 (VRTKCREMLT…EHQMARTGGT (117 aa)) folds into the TFIIS central domain. The TFIIS-type zinc-finger motif lies at 258-298 (DLFTCGKCRKKNCTYTQVQTRSSDEPMTTFVVCNECGNRWK). The Zn(2+) site is built by C262, C265, C290, and C293.

Belongs to the TFS-II family. Interacts with the basal transcription factor GTF2B. Interacts with REXO1.

It localises to the nucleus. Its function is as follows. Necessary for efficient RNA polymerase II transcription elongation past template-encoded arresting sites. The arresting sites in DNA have the property of trapping a certain fraction of elongating RNA polymerases that pass through, resulting in locked ternary complexes. Cleavage of the nascent transcript by S-II allows the resumption of elongation from the new 3'-terminus. The chain is Transcription elongation factor A protein 2 (TCEA2) from Bos taurus (Bovine).